A 502-amino-acid polypeptide reads, in one-letter code: Lysine--tRNA ligase (502 aa).

The Mg(2+) site is built by glutamate 412 and glutamate 419.

The protein belongs to the class-II aminoacyl-tRNA synthetase family. As to quaternary structure, homodimer. Mg(2+) serves as cofactor.

Its subcellular location is the cytoplasm. It carries out the reaction tRNA(Lys) + L-lysine + ATP = L-lysyl-tRNA(Lys) + AMP + diphosphate. The polypeptide is Lysine--tRNA ligase (Buchnera aphidicola subsp. Cinara cedri (strain Cc)).